Consider the following 382-residue polypeptide: D-galactonate dehydratase (382 aa).

Asp-183 serves as a coordination point for Mg(2+). The active-site Proton donor is His-185. Glu-209 and Glu-235 together coordinate Mg(2+). The active-site Proton acceptor is the His-285.

The protein belongs to the mandelate racemase/muconate lactonizing enzyme family. GalD subfamily. Requires Mg(2+) as cofactor.

The catalysed reaction is D-galactonate = 2-dehydro-3-deoxy-D-galactonate + H2O. Its pathway is carbohydrate acid metabolism; D-galactonate degradation; D-glyceraldehyde 3-phosphate and pyruvate from D-galactonate: step 1/3. Functionally, catalyzes the dehydration of D-galactonate to 2-keto-3-deoxy-D-galactonate. The polypeptide is D-galactonate dehydratase (Escherichia coli O9:H4 (strain HS)).